Here is a 417-residue protein sequence, read N- to C-terminus: Calreticulin (417 aa).

An N-terminal signal peptide occupies residues 1–17 (MLLSVPLLLGLLGLAAA). Positions 18–197 (EPAVYFKEQF…NSQVESGSLE (180 aa)) are N-domain. Q26 contributes to the Ca(2+) binding site. K48 carries the post-translational modification N6-acetyllysine. Positions 62 and 64 each coordinate Ca(2+). K64 carries the N6-(2-hydroxyisobutyryl)lysine modification. The cysteines at positions 105 and 137 are disulfide-linked. An alpha-D-glucoside contacts are provided by Y109, K111, Y128, and D135. Position 159 is an N6-acetyllysine (K159). Residues 191 to 202 (VESGSLEDDWDF) form a 1-1 repeat. A 4 X approximate repeats region spans residues 191 to 255 (VESGSLEDDW…DAKKPEDWDE (65 aa)). Positions 193 to 277 (SGSLEDDWDF…NPEYKGEWKP (85 aa)) are disordered. The interval 198–308 (DDWDFLPPKK…YSPDANIYAY (111 aa)) is P-domain. Over residues 207–251 (KIKDPDAAKPEDWDERAKIDDPTDSKPEDWDKPEHIPDPDAKKPE) the composition is skewed to basic and acidic residues. K209 carries the post-translational modification N6-acetyllysine. 6 tandem repeats follow at residues 210–221 (DPDAAKPEDWDE), 227–238 (DPTDSKPEDWDK), 244–255 (DPDAKKPEDWDE), 259–269 (GEWEPPVIQNP), 273–283 (GEWKPRQIDNP), and 287–297 (GTWIHPEIDNP). The interval 237 to 270 (DKPEHIPDPDAKKPEDWDEEMDGEWEPPVIQNPE) is interaction with PPIB. Over residues 252-261 (DWDEEMDGEW) the composition is skewed to acidic residues. The 3 X approximate repeats stretch occupies residues 259 to 297 (GEWEPPVIQNPEYKGEWKPRQIDNPDYKGTWIHPEIDNP). The C-domain stretch occupies residues 309–417 (DSFAVLGLDL…TTPGQTKDEL (109 aa)). D317 contacts an alpha-D-glucoside. D328 is a binding site for Ca(2+). The segment at 350–417 (TKASEKQMKD…TTPGQTKDEL (68 aa)) is disordered. Residues 352-379 (ASEKQMKDKQDEEQRLKEEEEDKKRKEE) show a composition bias toward basic and acidic residues. Residues 380 to 408 (EEAEDKEDEDDRDEDEEDEDEKEEDEEDT) show a composition bias toward acidic residues. Residues 414–417 (KDEL) carry the Prevents secretion from ER motif.

It belongs to the calreticulin family. In terms of assembly, monomer. Component of an EIF2 complex at least composed of CELF1/CUGBP1, CALR, CALR3, EIF2S1, EIF2S2, HSP90B1 and HSPA5. Interacts with PDIA3/ERp57 and SPACA9. Interacts with TRIM21. Interacts with NR3C1. Interacts with PPIB. Interacts (via P-domain) with PDIA5. Interacts with GABARAP. Interacts with CLCC1.

The protein localises to the endoplasmic reticulum lumen. Its subcellular location is the cytoplasm. It is found in the cytosol. It localises to the cytolytic granule. The protein resides in the secreted. The protein localises to the extracellular space. Its subcellular location is the extracellular matrix. It is found in the cell surface. It localises to the sarcoplasmic reticulum lumen. The protein resides in the cytoplasmic vesicle. The protein localises to the secretory vesicle. Its subcellular location is the cortical granule. Functionally, calcium-binding chaperone that promotes folding, oligomeric assembly and quality control in the endoplasmic reticulum (ER) via the calreticulin/calnexin cycle. This lectin interacts transiently with almost all of the monoglucosylated glycoproteins that are synthesized in the ER. Interacts with the DNA-binding domain of NR3C1 and mediates its nuclear export. Involved in maternal gene expression regulation. May participate in oocyte maturation via the regulation of calcium homeostasis. Present in the cortical granules of non-activated oocytes, is exocytosed during the cortical reaction in response to oocyte activation and might participate in the block to polyspermy. The polypeptide is Calreticulin (CALR) (Cricetulus griseus (Chinese hamster)).